Reading from the N-terminus, the 63-residue chain is MSDHFNFNEAFNSQTMRGRANVAKATWASLGLVYVLVKMHRRNTKRRETKLYCKGCQQAMLHG.

Residues 15–37 (TMRGRANVAKATWASLGLVYVLV) traverse the membrane as a helical segment.

In terms of assembly, F-type ATPases have 2 components, CF(1) - the catalytic core - and CF(0) - the membrane proton channel. CF(1) has five subunits: alpha(3), beta(3), gamma(1), delta(1), epsilon(1). CF(0) has three main subunits: a, b and c. The ATP synthase complex/complex V exists as a monomeric and a dimeric supercomplex that helps shape mitochondrial cristae to optimize proton flow.

Its subcellular location is the mitochondrion membrane. Functionally, mitochondrial membrane ATP synthase (F(1)F(0) ATP synthase or Complex V) produces ATP from ADP in the presence of a proton gradient across the membrane which is generated by electron transport complexes of the respiratory chain. F-type ATPases consist of two structural domains, F(1) - containing the extramembraneous catalytic core and F(0) - containing the membrane proton channel, linked together by a central stalk and a peripheral stalk. During catalysis, ATP synthesis in the catalytic domain of F(1) is coupled via a rotary mechanism of the central stalk subunits to proton translocation. ATP5MK is a minor subunit of the mitochondrial membrane ATP synthase required for dimerization of the ATP synthase complex and as such regulates ATP synthesis in the mitochondria. In Drosophila melanogaster (Fruit fly), this protein is ATP synthase membrane subunit K, mitochondrial.